The sequence spans 733 residues: Ribosomal protein S6 kinase 2 alpha (733 aa).

The disordered stretch occupies residues 18 to 38 (EDPENGHGSPEEGGRHTSKDE). The Protein kinase 1 domain maps to 62 to 321 (FVLLKVLGQG…AEEIKRQPFF (260 aa)). Residues 68-76 (LGQGSFGKV) and lysine 94 each bind ATP. Aspartate 187 serves as the catalytic Proton acceptor. The residue at position 221 (serine 221) is a Phosphoserine. The region spanning 322-391 (STIDWNKLFR…VAPALVEEDA (70 aa)) is the AGC-kinase C-terminal domain. Threonine 359 carries the phosphothreonine modification. Position 363 is a phosphoserine (serine 363). Serine 380 carries the phosphoserine; by autocatalysis modification. Residues 416–673 (YTVRETIGVG…AKQVLQHEWI (258 aa)) form the Protein kinase 2 domain. Residues 422-430 (IGVGSYSVC) and lysine 445 each bind ATP. Aspartate 533 serves as the catalytic Proton acceptor. The residue at position 571 (threonine 571) is a Phosphothreonine. Serine 730 bears the Phosphoserine mark.

Belongs to the protein kinase superfamily. AGC Ser/Thr protein kinase family. S6 kinase subfamily. Mg(2+) is required as a cofactor. Post-translationally, autophosphorylated on Ser-380, as part of the activation process.

The enzyme catalyses L-seryl-[protein] + ATP = O-phospho-L-seryl-[protein] + ADP + H(+). It catalyses the reaction L-threonyl-[protein] + ATP = O-phospho-L-threonyl-[protein] + ADP + H(+). With respect to regulation, activated by multiple phosphorylations on threonine and serine residues. Functionally, serine/threonine kinase that may play a role in mediating the growth-factor and stress induced activation of transcription. This Xenopus laevis (African clawed frog) protein is Ribosomal protein S6 kinase 2 alpha (rps6ka).